A 325-amino-acid chain; its full sequence is Tetraacyldisaccharide 4'-kinase (325 aa).

58-65 (TVGGSGKT) is a binding site for ATP.

Belongs to the LpxK family.

It catalyses the reaction a lipid A disaccharide + ATP = a lipid IVA + ADP + H(+). The protein operates within glycolipid biosynthesis; lipid IV(A) biosynthesis; lipid IV(A) from (3R)-3-hydroxytetradecanoyl-[acyl-carrier-protein] and UDP-N-acetyl-alpha-D-glucosamine: step 6/6. Its function is as follows. Transfers the gamma-phosphate of ATP to the 4'-position of a tetraacyldisaccharide 1-phosphate intermediate (termed DS-1-P) to form tetraacyldisaccharide 1,4'-bis-phosphate (lipid IVA). The protein is Tetraacyldisaccharide 4'-kinase of Coxiella burnetii (strain RSA 331 / Henzerling II).